Consider the following 222-residue polypeptide: Large ribosomal subunit protein mL64 (222 aa).

2 disordered regions span residues 21–47 and 186–222; these read RSRS…NLLT and QRKR…EPSS. The stretch at 98–207 forms a coiled coil; that stretch reads TMQESLRLQQ…KKEARIAAMA (110 aa). Residues 184-200 carry the Nuclear localization signal motif; the sequence is KQQRKRLKEERQRQKKE. The span at 186–202 shows a compositional bias: basic and acidic residues; the sequence is QRKRLKEERQRQKKEAR. A compositionally biased stretch (low complexity) spans 203–215; that stretch reads IAAMASAEAQDSA.

Belongs to the mitochondrion-specific ribosomal protein mL64 family. In terms of assembly, component of the mitochondrial ribosome large subunit (39S) which comprises a 16S rRNA and about 50 distinct proteins. Interacts with GADD45A, GADD45B and GADD45G. Interacts with NR4A1 via the NR4A1 AB domain. Interacts with ATAD3A and ATAD3B.

It localises to the mitochondrion. The protein resides in the nucleus. Functionally, acts as a negative regulator of G1 to S cell cycle phase progression by inhibiting cyclin-dependent kinases. Inhibitory effects are additive with GADD45 proteins but also occur in the absence of GADD45 proteins. Acts as a repressor of the orphan nuclear receptor NR4A1 by inhibiting AB domain-mediated transcriptional activity. May be involved in the hormone-mediated regulation of NR4A1 transcriptional activity. May play a role in mitochondrial protein synthesis. In Mus musculus (Mouse), this protein is Large ribosomal subunit protein mL64 (Gadd45gip1).